Consider the following 520-residue polypeptide: GMP synthase [glutamine-hydrolyzing] (520 aa).

The Glutamine amidotransferase type-1 domain occupies Lys-9–Gln-202. Cys-86 (nucleophile) is an active-site residue. Catalysis depends on residues His-176 and Glu-178. The region spanning Trp-203–Arg-395 is the GMPS ATP-PPase domain. Ser-230–Ser-236 serves as a coordination point for ATP.

Homodimer.

It carries out the reaction XMP + L-glutamine + ATP + H2O = GMP + L-glutamate + AMP + diphosphate + 2 H(+). The protein operates within purine metabolism; GMP biosynthesis; GMP from XMP (L-Gln route): step 1/1. In terms of biological role, catalyzes the synthesis of GMP from XMP. The protein is GMP synthase [glutamine-hydrolyzing] of Geobacter metallireducens (strain ATCC 53774 / DSM 7210 / GS-15).